The sequence spans 430 residues: GPI mannosyltransferase 1 (430 aa).

At 1–11 (MELQSLIDTVS) the chain is on the cytoplasmic side. Residues 12–32 (LQKLLLLGALLRLILIAYAFF) traverse the membrane as a helical segment. At 33–72 (HDQWFRVKYTDIDYMIVVDGARHMWNGGSPFDRTTFRYTP) the chain is on the lumenal side. The chain crosses the membrane as a helical span at residues 73 to 93 (LLAALVMPSIWIANPMGKLIF). Residues 94–115 (ASSDLGAAWYCYGVLKSFAKER) are Cytoplasmic-facing. The chain crosses the membrane as a helical span at residues 116 to 136 (SAKWMVSLFILFNPIVLSVST). At 137 to 163 (RGNSDMLVTFMSLMVLSKFARRKCYQA) the chain is on the lumenal side. Residues 164–184 (AAVLGFAVHFKIYPIIYALPL) traverse the membrane as a helical segment. Topologically, residues 185–206 (TLGVWEQSVAASTNTWRRVVKT) are cytoplasmic. The chain crosses the membrane as a helical span at residues 207-227 (AVVVSICALMAAISFAVPTVL). The Lumenal segment spans residues 228-360 (CYMKYGQQYL…AFKFFSWVKA (133 aa)). A helical membrane pass occupies residues 361–381 (LGVVLMWAATIPLWVTTAVPL). Residues 382–388 (EFHGYSD) are Cytoplasmic-facing. Residues 389 to 409 (FAQLWIVSCLFFLAMVVLASM) traverse the membrane as a helical segment. The Lumenal segment spans residues 410–430 (LARIAYRVQCTKCSAKSIKVA).

This sequence belongs to the PIGM family.

The protein resides in the endoplasmic reticulum membrane. The protein operates within glycolipid biosynthesis; glycosylphosphatidylinositol-anchor biosynthesis. Its function is as follows. Mannosyltransferase involved in glycosylphosphatidylinositol-anchor biosynthesis. Transfers the first alpha-1,4-mannose to GlcN-PI during GPI precursor assembly. The sequence is that of GPI mannosyltransferase 1 (PIGM) from Trypanosoma brucei brucei (strain 927/4 GUTat10.1).